The following is a 24-amino-acid chain: 29 kDa outer membrane protein (24 aa).

The protein resides in the cell outer membrane. In terms of biological role, may be involved in transporting molecules across the outer membrane. The chain is 29 kDa outer membrane protein from Acinetobacter baumannii.